A 222-amino-acid polypeptide reads, in one-letter code: MTETLPTPVLDTAQARVLGCLIEKEATTPDAYPLTVNAAQVAANQKTAREPVLTLQTGKVHHALRQLETLGLVRQQFSSRAERYEHRLGSALDLTRQQVAVIGLLLLRGPQTLGELFARSERLARFNDSDDVRHHLERLIQRGLAVQLPRASGQREDRYAHLLSGELDLDALQAAAARAAPSARSGADSSELEARVLSLETTVAELQDALSALQARLDAAGA.

It belongs to the UPF0502 family.

This Xanthomonas campestris pv. campestris (strain ATCC 33913 / DSM 3586 / NCPPB 528 / LMG 568 / P 25) protein is UPF0502 protein XCC4136.